Here is a 233-residue protein sequence, read N- to C-terminus: Large ribosomal subunit protein uL1 (233 aa).

This sequence belongs to the universal ribosomal protein uL1 family. In terms of assembly, part of the 50S ribosomal subunit.

Binds directly to 23S rRNA. The L1 stalk is quite mobile in the ribosome, and is involved in E site tRNA release. In terms of biological role, protein L1 is also a translational repressor protein, it controls the translation of the L11 operon by binding to its mRNA. The polypeptide is Large ribosomal subunit protein uL1 (Geobacillus thermodenitrificans (strain NG80-2)).